The chain runs to 323 residues: Lipoyl synthase (323 aa).

The [4Fe-4S] cluster site is built by Cys-56, Cys-61, Cys-67, Cys-82, Cys-86, Cys-89, and Ser-293. Positions 68–282 constitute a Radical SAM core domain; sequence WEDREATFLI…AAEARELGFA (215 aa).

It belongs to the radical SAM superfamily. Lipoyl synthase family. It depends on [4Fe-4S] cluster as a cofactor.

The protein localises to the cytoplasm. The enzyme catalyses [[Fe-S] cluster scaffold protein carrying a second [4Fe-4S](2+) cluster] + N(6)-octanoyl-L-lysyl-[protein] + 2 oxidized [2Fe-2S]-[ferredoxin] + 2 S-adenosyl-L-methionine + 4 H(+) = [[Fe-S] cluster scaffold protein] + N(6)-[(R)-dihydrolipoyl]-L-lysyl-[protein] + 4 Fe(3+) + 2 hydrogen sulfide + 2 5'-deoxyadenosine + 2 L-methionine + 2 reduced [2Fe-2S]-[ferredoxin]. Its pathway is protein modification; protein lipoylation via endogenous pathway; protein N(6)-(lipoyl)lysine from octanoyl-[acyl-carrier-protein]: step 2/2. Catalyzes the radical-mediated insertion of two sulfur atoms into the C-6 and C-8 positions of the octanoyl moiety bound to the lipoyl domains of lipoate-dependent enzymes, thereby converting the octanoylated domains into lipoylated derivatives. In Acidothermus cellulolyticus (strain ATCC 43068 / DSM 8971 / 11B), this protein is Lipoyl synthase.